The primary structure comprises 432 residues: Glutamate-1-semialdehyde 2,1-aminomutase 1 (432 aa).

The residue at position 268 (Lys268) is an N6-(pyridoxal phosphate)lysine.

Belongs to the class-III pyridoxal-phosphate-dependent aminotransferase family. HemL subfamily. As to quaternary structure, homodimer. Pyridoxal 5'-phosphate serves as cofactor.

It localises to the cytoplasm. It catalyses the reaction (S)-4-amino-5-oxopentanoate = 5-aminolevulinate. It functions in the pathway porphyrin-containing compound metabolism; protoporphyrin-IX biosynthesis; 5-aminolevulinate from L-glutamyl-tRNA(Glu): step 2/2. This chain is Glutamate-1-semialdehyde 2,1-aminomutase 1, found in Bacillus cereus (strain B4264).